A 919-amino-acid polypeptide reads, in one-letter code: Phosphoenolpyruvate carboxylase (919 aa).

Catalysis depends on residues H138 and K579.

The protein belongs to the PEPCase type 1 family. The cofactor is Mg(2+).

The catalysed reaction is oxaloacetate + phosphate = phosphoenolpyruvate + hydrogencarbonate. With respect to regulation, activity not stimulated by acetyl-CoA in the absence of any allosteric inhibitor, while the corresponding protein from E.coli is strongly stimulated. Functionally, forms oxaloacetate, a four-carbon dicarboxylic acid source for the tricarboxylic acid cycle. This Corynebacterium glutamicum (strain ATCC 13032 / DSM 20300 / JCM 1318 / BCRC 11384 / CCUG 27702 / LMG 3730 / NBRC 12168 / NCIMB 10025 / NRRL B-2784 / 534) protein is Phosphoenolpyruvate carboxylase (ppc).